A 196-amino-acid polypeptide reads, in one-letter code: Imidazoleglycerol-phosphate dehydratase (196 aa).

It belongs to the imidazoleglycerol-phosphate dehydratase family.

The protein resides in the cytoplasm. The enzyme catalyses D-erythro-1-(imidazol-4-yl)glycerol 3-phosphate = 3-(imidazol-4-yl)-2-oxopropyl phosphate + H2O. The protein operates within amino-acid biosynthesis; L-histidine biosynthesis; L-histidine from 5-phospho-alpha-D-ribose 1-diphosphate: step 6/9. The sequence is that of Imidazoleglycerol-phosphate dehydratase from Dehalococcoides mccartyi (strain ATCC BAA-2266 / KCTC 15142 / 195) (Dehalococcoides ethenogenes (strain 195)).